Reading from the N-terminus, the 124-residue chain is Small ribosomal subunit protein uS12 (124 aa).

Position 90 is a 3-methylthioaspartic acid (Asp90).

Belongs to the universal ribosomal protein uS12 family. Part of the 30S ribosomal subunit. Contacts proteins S8 and S17. May interact with IF1 in the 30S initiation complex.

Functionally, with S4 and S5 plays an important role in translational accuracy. Its function is as follows. Interacts with and stabilizes bases of the 16S rRNA that are involved in tRNA selection in the A site and with the mRNA backbone. Located at the interface of the 30S and 50S subunits, it traverses the body of the 30S subunit contacting proteins on the other side and probably holding the rRNA structure together. The combined cluster of proteins S8, S12 and S17 appears to hold together the shoulder and platform of the 30S subunit. In Wolbachia sp. subsp. Brugia malayi (strain TRS), this protein is Small ribosomal subunit protein uS12.